Consider the following 501-residue polypeptide: Probable cytosol aminopeptidase (501 aa).

Mn(2+) contacts are provided by Lys-270 and Asp-275. Residue Lys-282 is part of the active site. Residues Asp-293, Asp-352, and Glu-354 each contribute to the Mn(2+) site. The active site involves Arg-356.

Belongs to the peptidase M17 family. Mn(2+) serves as cofactor.

It is found in the cytoplasm. It catalyses the reaction Release of an N-terminal amino acid, Xaa-|-Yaa-, in which Xaa is preferably Leu, but may be other amino acids including Pro although not Arg or Lys, and Yaa may be Pro. Amino acid amides and methyl esters are also readily hydrolyzed, but rates on arylamides are exceedingly low.. The catalysed reaction is Release of an N-terminal amino acid, preferentially leucine, but not glutamic or aspartic acids.. Presumably involved in the processing and regular turnover of intracellular proteins. Catalyzes the removal of unsubstituted N-terminal amino acids from various peptides. The polypeptide is Probable cytosol aminopeptidase (Wigglesworthia glossinidia brevipalpis).